A 200-amino-acid chain; its full sequence is High mobility group protein 1 homolog (200 aa).

2 consecutive DNA-binding regions (HMG box) follow at residues 11–81 and 100–168; these read PRGR…QSYK and PKRN…AEYK. Basic and acidic residues predominate over residues 64-86; the sequence is EKSMRDKVRYDREMQSYKPPKGE. Disordered stretches follow at residues 64 to 103 and 169 to 200; these read EKSMRDKVRYDREMQSYKPPKGEKNKRRRRRKDPDAPKRN and AKAKPMKRQVKESSSSSSSDSSSDDSSSDDSD. A compositionally biased stretch (acidic residues) spans 190–200; that stretch reads SSDDSSSDDSD.

The protein belongs to the HMGB family.

The protein localises to the nucleus. It is found in the chromosome. Binds preferentially single-stranded DNA and unwinds double-stranded DNA. The polypeptide is High mobility group protein 1 homolog (HMG1) (Strongylocentrotus purpuratus (Purple sea urchin)).